A 62-amino-acid polypeptide reads, in one-letter code: Conotoxin Lt5.8 (62 aa).

The N-terminal stretch at 1-19 (MLCLPVFIILLLLVSPAAT) is a signal peptide. Residues 20–47 (MPVDLEILKAPTKESRKDFEMRIELLRS) constitute a propeptide that is removed on maturation. A Pyrrolidone carboxylic acid modification is found at Q50. Q61 is subject to Glutamine amide.

Belongs to the conotoxin T superfamily. Post-translationally, contains 2 disulfide bonds that can be either 'C1-C3, C2-C4' or 'C1-C4, C2-C3', since these disulfide connectivities have been observed for conotoxins with cysteine framework V (for examples, see AC P0DQQ7 and AC P81755). Expressed by the venom duct.

The protein localises to the secreted. This chain is Conotoxin Lt5.8, found in Conus litteratus (Lettered cone).